Here is a 184-residue protein sequence, read N- to C-terminus: dCTP deaminase (184 aa).

Residues 107-112, 131-133, Gln152, Tyr166, and Gln176 contribute to the dCTP site; these read KSTYAR and TLE. Glu133 acts as the Proton donor/acceptor in catalysis.

The protein belongs to the dCTP deaminase family. In terms of assembly, homotrimer.

The enzyme catalyses dCTP + H2O + H(+) = dUTP + NH4(+). It functions in the pathway pyrimidine metabolism; dUMP biosynthesis; dUMP from dCTP (dUTP route): step 1/2. Its function is as follows. Catalyzes the deamination of dCTP to dUTP. In Erythrobacter litoralis (strain HTCC2594), this protein is dCTP deaminase.